A 334-amino-acid polypeptide reads, in one-letter code: MEGRYKDYRIRFSPGWVEVVQDDVTVPSRRALITGATGLLGRAVYKEFKENSWHVLGCGYSRARPRFECLNLLDEAAVKALIQDFKPHVIIHCAAERRPDIVESQPELASLLNVVASENLAKVAAGVGAFLIYVSSDYVFDGTSPPYREDSIPHPLNLYGKTKLDGERAVLQNNEGAAVLRVPVMYGDVEKLSESAVTILFDKVQFSNKSANLDHCQQRFPTHVKDVATVCLQLTERKIQDPSIKGIYHWSGNEQMTKYEIACAMADAFNLPSSHLRPITDEPVGATPRPWNPQLDCSKLEKMGIGQRTPFRVGIRETLWPFLVDKRWRQTVFH.

NADP(+) is bound by residues 37 to 40, 60 to 62, 71 to 72, Cys-93, Arg-97, and Tyr-159; these read TGLL, YSR, and NL. Positions 319–334 are required for interaction with MAT2A; sequence LWPFLVDKRWRQTVFH.

Belongs to the dTDP-4-dehydrorhamnose reductase family. MAT2B subfamily. Heterotrimer; composed of a catalytic mat2a homodimer that binds one regulatory mat2b chain. Heterohexamer; composed of a central, catalytic mat2a homotetramer flanked on either side by a regulatory mat2b chain. NADP binding increases the affinity for mat2a.

It functions in the pathway amino-acid biosynthesis; S-adenosyl-L-methionine biosynthesis; S-adenosyl-L-methionine from L-methionine: step 1/1. Regulatory subunit of S-adenosylmethionine synthetase 2, an enzyme that catalyzes the formation of S-adenosylmethionine from methionine and ATP. Regulates MAT2A catalytic activity by changing its kinetic properties, increasing its affinity for L-methionine. Can bind NADP (in vitro). In Xenopus laevis (African clawed frog), this protein is Methionine adenosyltransferase 2 subunit beta (mat2b).